We begin with the raw amino-acid sequence, 718 residues long: Kelch-like protein 4 (718 aa).

The interval 46–69 (TPVQGRLKSHSRDRNGLKKSNSPV) is disordered. In terms of domain architecture, BTB spans 182–249 (CDVLLIAGHL…AYTGVLQLKE (68 aa)). Kelch repeat units follow at residues 430 to 476 (ALYA…VIDN), 477 to 523 (KLYV…TLEG), 525 to 570 (MYAV…ALNN), 571 to 617 (KLYA…TYNG), 619 to 670 (LYVV…PLGD), and 671 to 717 (KLYV…VVKL).

In terms of tissue distribution, expressed in adult fibroblasts and in a range of fetal tissues including tongue, palate, and mandible.

It localises to the cytoplasm. The protein resides in the cytoskeleton. The polypeptide is Kelch-like protein 4 (KLHL4) (Homo sapiens (Human)).